Consider the following 138-residue polypeptide: ATP synthase epsilon chain (138 aa).

Belongs to the ATPase epsilon chain family. In terms of assembly, F-type ATPases have 2 components, CF(1) - the catalytic core - and CF(0) - the membrane proton channel. CF(1) has five subunits: alpha(3), beta(3), gamma(1), delta(1), epsilon(1). CF(0) has three main subunits: a, b and c.

It is found in the cell inner membrane. Its function is as follows. Produces ATP from ADP in the presence of a proton gradient across the membrane. This Ruthia magnifica subsp. Calyptogena magnifica protein is ATP synthase epsilon chain.